A 251-amino-acid chain; its full sequence is Cell division protein ZapD (251 aa).

It belongs to the ZapD family. In terms of assembly, interacts with FtsZ.

It localises to the cytoplasm. Functionally, cell division factor that enhances FtsZ-ring assembly. Directly interacts with FtsZ and promotes bundling of FtsZ protofilaments, with a reduction in FtsZ GTPase activity. This chain is Cell division protein ZapD, found in Burkholderia multivorans (strain ATCC 17616 / 249).